A 356-amino-acid polypeptide reads, in one-letter code: Protein pelota homolog (356 aa).

It belongs to the eukaryotic release factor 1 family. Pelota subfamily. As to quaternary structure, monomer. The cofactor is a divalent metal cation.

It localises to the cytoplasm. Functionally, may function in recognizing stalled ribosomes, interact with stem-loop structures in stalled mRNA molecules, and effect endonucleolytic cleavage of the mRNA. May play a role in the release non-functional ribosomes and degradation of damaged mRNAs. Has endoribonuclease activity. This Pyrococcus horikoshii (strain ATCC 700860 / DSM 12428 / JCM 9974 / NBRC 100139 / OT-3) protein is Protein pelota homolog.